The following is a 190-amino-acid chain: Adenine phosphoribosyltransferase (190 aa).

This sequence belongs to the purine/pyrimidine phosphoribosyltransferase family. Homodimer.

The protein resides in the cytoplasm. The enzyme catalyses AMP + diphosphate = 5-phospho-alpha-D-ribose 1-diphosphate + adenine. It participates in purine metabolism; AMP biosynthesis via salvage pathway; AMP from adenine: step 1/1. Catalyzes a salvage reaction resulting in the formation of AMP, that is energically less costly than de novo synthesis. This chain is Adenine phosphoribosyltransferase, found in Treponema denticola (strain ATCC 35405 / DSM 14222 / CIP 103919 / JCM 8153 / KCTC 15104).